We begin with the raw amino-acid sequence, 378 residues long: UDP-N-acetylglucosamine--N-acetylmuramyl-(pentapeptide) pyrophosphoryl-undecaprenol N-acetylglucosamine transferase (378 aa).

UDP-N-acetyl-alpha-D-glucosamine is bound by residues 14–16 (TGG), asparagine 125, arginine 165, serine 193, and glutamine 293.

It belongs to the glycosyltransferase 28 family. MurG subfamily.

It is found in the cell inner membrane. The enzyme catalyses di-trans,octa-cis-undecaprenyl diphospho-N-acetyl-alpha-D-muramoyl-L-alanyl-D-glutamyl-meso-2,6-diaminopimeloyl-D-alanyl-D-alanine + UDP-N-acetyl-alpha-D-glucosamine = di-trans,octa-cis-undecaprenyl diphospho-[N-acetyl-alpha-D-glucosaminyl-(1-&gt;4)]-N-acetyl-alpha-D-muramoyl-L-alanyl-D-glutamyl-meso-2,6-diaminopimeloyl-D-alanyl-D-alanine + UDP + H(+). It participates in cell wall biogenesis; peptidoglycan biosynthesis. Functionally, cell wall formation. Catalyzes the transfer of a GlcNAc subunit on undecaprenyl-pyrophosphoryl-MurNAc-pentapeptide (lipid intermediate I) to form undecaprenyl-pyrophosphoryl-MurNAc-(pentapeptide)GlcNAc (lipid intermediate II). The sequence is that of UDP-N-acetylglucosamine--N-acetylmuramyl-(pentapeptide) pyrophosphoryl-undecaprenol N-acetylglucosamine transferase from Bartonella henselae (strain ATCC 49882 / DSM 28221 / CCUG 30454 / Houston 1) (Rochalimaea henselae).